A 267-amino-acid chain; its full sequence is tRNA pseudouridine synthase A (267 aa).

Residue Asp-53 is the Nucleophile of the active site. Residue Tyr-114 coordinates substrate.

It belongs to the tRNA pseudouridine synthase TruA family. Homodimer.

The catalysed reaction is uridine(38/39/40) in tRNA = pseudouridine(38/39/40) in tRNA. Formation of pseudouridine at positions 38, 39 and 40 in the anticodon stem and loop of transfer RNAs. In Chlamydia trachomatis serovar L2b (strain UCH-1/proctitis), this protein is tRNA pseudouridine synthase A.